The chain runs to 526 residues: Flavonoid 3'-monooxygenase CYP75B3 (526 aa).

Residues 6-26 traverse the membrane as a helical segment; that stretch reads LPLLLGSLAVSAAVWYLVYFL. Cysteine 461 provides a ligand contact to heme.

Belongs to the cytochrome P450 family. Requires heme as cofactor.

It is found in the membrane. It catalyses the reaction a 3'-unsubstituted flavone + reduced [NADPH--hemoprotein reductase] + O2 = a 3'-hydroxyflavone + oxidized [NADPH--hemoprotein reductase] + H2O + H(+). It participates in secondary metabolite biosynthesis; flavonoid biosynthesis. Functionally, catalyzes the 3'-hydroxylation of the flavonoid B-ring to the 3',4'-hydroxylated state. Catalyzes the 3'-hydroxylation of apigenin to generate luteolin. The polypeptide is Flavonoid 3'-monooxygenase CYP75B3 (Oryza sativa subsp. japonica (Rice)).